The sequence spans 457 residues: Siroheme synthase (457 aa).

The interval 1 to 204 (MDHLPIFCQL…NDQKAITETT (204 aa)) is precorrin-2 dehydrogenase /sirohydrochlorin ferrochelatase. NAD(+) contacts are provided by residues 22–23 (DV) and 43–44 (LA). Residue S128 is modified to Phosphoserine. Residues 216–457 (GEVVLVGAGP…RDKLNWFSNH (242 aa)) form a uroporphyrinogen-III C-methyltransferase region. P225 provides a ligand contact to S-adenosyl-L-methionine. D248 acts as the Proton acceptor in catalysis. The active-site Proton donor is K270. S-adenosyl-L-methionine-binding positions include 301-303 (GGD), I306, 331-332 (TA), M382, and G411.

It in the N-terminal section; belongs to the precorrin-2 dehydrogenase / sirohydrochlorin ferrochelatase family. The protein in the C-terminal section; belongs to the precorrin methyltransferase family.

The enzyme catalyses uroporphyrinogen III + 2 S-adenosyl-L-methionine = precorrin-2 + 2 S-adenosyl-L-homocysteine + H(+). The catalysed reaction is precorrin-2 + NAD(+) = sirohydrochlorin + NADH + 2 H(+). It carries out the reaction siroheme + 2 H(+) = sirohydrochlorin + Fe(2+). It functions in the pathway cofactor biosynthesis; adenosylcobalamin biosynthesis; precorrin-2 from uroporphyrinogen III: step 1/1. The protein operates within cofactor biosynthesis; adenosylcobalamin biosynthesis; sirohydrochlorin from precorrin-2: step 1/1. It participates in porphyrin-containing compound metabolism; siroheme biosynthesis; precorrin-2 from uroporphyrinogen III: step 1/1. Its pathway is porphyrin-containing compound metabolism; siroheme biosynthesis; siroheme from sirohydrochlorin: step 1/1. It functions in the pathway porphyrin-containing compound metabolism; siroheme biosynthesis; sirohydrochlorin from precorrin-2: step 1/1. Multifunctional enzyme that catalyzes the SAM-dependent methylations of uroporphyrinogen III at position C-2 and C-7 to form precorrin-2 via precorrin-1. Then it catalyzes the NAD-dependent ring dehydrogenation of precorrin-2 to yield sirohydrochlorin. Finally, it catalyzes the ferrochelation of sirohydrochlorin to yield siroheme. This Escherichia coli O8 (strain IAI1) protein is Siroheme synthase.